The primary structure comprises 131 residues: Aspartate 1-decarboxylase (131 aa).

Catalysis depends on Ser-25, which acts as the Schiff-base intermediate with substrate; via pyruvic acid. A Pyruvic acid (Ser) modification is found at Ser-25. Substrate is bound at residue Thr-57. The active-site Proton donor is the Tyr-58. Substrate is bound at residue 73-75; the sequence is GAA.

It belongs to the PanD family. As to quaternary structure, heterooctamer of four alpha and four beta subunits. The cofactor is pyruvate. Post-translationally, is synthesized initially as an inactive proenzyme, which is activated by self-cleavage at a specific serine bond to produce a beta-subunit with a hydroxyl group at its C-terminus and an alpha-subunit with a pyruvoyl group at its N-terminus.

It localises to the cytoplasm. It carries out the reaction L-aspartate + H(+) = beta-alanine + CO2. The protein operates within cofactor biosynthesis; (R)-pantothenate biosynthesis; beta-alanine from L-aspartate: step 1/1. In terms of biological role, catalyzes the pyruvoyl-dependent decarboxylation of aspartate to produce beta-alanine. The polypeptide is Aspartate 1-decarboxylase (Anaeromyxobacter sp. (strain Fw109-5)).